The chain runs to 181 residues: MSADENNLIWIDLEMTGLDPERDRIIEIATLVTDASLNILAEGPTIAVHQSDAQLALMDDWNVRTHTGSGLVDRVKASTMGERDAELATIEFLKTWVPAGKSPICGNSIGQDRRFLFKYMPELEAYFHYRYLDVSTLKELARRWKPEILAGFTKQGTHQAMDDIRESVAELAYYREHFIKL.

An Exonuclease domain is found at 8–171; that stretch reads LIWIDLEMTG…DDIRESVAEL (164 aa). Residue Tyr129 is part of the active site.

It belongs to the oligoribonuclease family.

The protein resides in the cytoplasm. 3'-to-5' exoribonuclease specific for small oligoribonucleotides. This chain is Oligoribonuclease, found in Salmonella choleraesuis (strain SC-B67).